Reading from the N-terminus, the 327-residue chain is MDQVHHRALDALQSFIALTDSSSATSPRYIASIITNATSSPHTYVFAELLERPAVQALRSPDTPAEFQSYLTLLEIFAWGTWQDYQQTPNLPPLSEEQARKLRLLTLLSLASTIKPLTYEALMTSLSLSAPSELESLVTTAIYSSLITGRLSPATNPPTVNVTSVAPLRDVKPSSLPTMISTLTAWEARCGSVISDIETEIAKIRADSAQRRQKEHARAVAIEKTLEKWNAEGGEQLQGGNPGQGQGQGQGGLGKNAGWKPRDLSTAMFERGFFGGGSNKREFDDDGYFDGGSSDFDQHGSGMDIDEGAGARASGARHSKRFLGKKS.

The PCI domain occupies 4 to 165; that stretch reads VHHRALDALQ…NPPTVNVTSV (162 aa). Disordered stretches follow at residues 233 to 260 and 276 to 327; these read GGEQLQGGNPGQGQGQGQGGLGKNAGWK and GGSN…GKKS. Positions 236 to 255 are enriched in gly residues; the sequence is QLQGGNPGQGQGQGQGGLGK. Residues 315–327 show a composition bias toward basic residues; it reads GARHSKRFLGKKS.

Belongs to the CSN7/EIF3M family. CSN7 subfamily. In terms of assembly, component of the COP9 signalosome (CSN) complex. Present in uninduced vegetative hyphae, induced conidiating cultures and in both conidiospores and ascospores.

It localises to the cytoplasm. The protein resides in the nucleus. In terms of biological role, component of the COP9 signalosome (CSN) complex that acts as an regulator of the ubiquitin (Ubl) conjugation pathway by mediating the deneddylation of the cullin subunit of SCF-type E3 ubiquitin-protein ligase complexes. The CSN complex seems to link protein degradation to sexual development. May be required for sporulation only at elevated temperatures. The chain is COP9 signalosome complex subunit 7 (csnG) from Emericella nidulans (strain FGSC A4 / ATCC 38163 / CBS 112.46 / NRRL 194 / M139) (Aspergillus nidulans).